The chain runs to 1726 residues: Transcription elongation factor SPT6 (1726 aa).

3 stretches are compositionally biased toward acidic residues: residues Met-1–Glu-18, Glu-31–Asp-45, and Asp-55–Gly-79. Disordered regions lie at residues Met-1 to Lys-196, Ala-219 to Thr-248, and Glu-482 to Arg-512. Ser-90 carries the post-translational modification Phosphoserine. Residues Asp-93–Glu-104 are compositionally biased toward acidic residues. The segment covering Lys-110–Arg-120 has biased composition (basic residues). Acidic residues-rich tracts occupy residues Gly-146 to Ala-157, Asp-166 to Gly-186, Ala-219 to Ser-240, and Ser-484 to Glu-501. Residues Gln-502–Arg-512 show a composition bias toward basic and acidic residues. Residues Leu-806–Asn-865 are a coiled coil. Positions Trp-1204–Arg-1273 constitute an S1 motif domain. The 111-residue stretch at Tyr-1316 to Cys-1426 folds into the SH2 domain. Phosphothreonine is present on Thr-1522. Phosphoserine is present on Ser-1525. The span at Leu-1611–Met-1627 shows a compositional bias: polar residues. Residues Leu-1611–Arg-1726 form a disordered region. 2 stretches are compositionally biased toward low complexity: residues Thr-1628–Ser-1640 and Ser-1647–Ser-1656. Residues Arg-1657–Thr-1669 show a composition bias toward polar residues.

This sequence belongs to the SPT6 family.

The protein localises to the nucleus. In terms of biological role, histone H3-H4 chaperone that plays a role in maintenance of chromatin structure during RNA polymerase II transcription elongation. Promotes the activation of the myogenic gene program by entailing erasure of the repressive H3K27me3 epigenetic mark through stabilization of the chromatin interaction of the H3K27 demethylase KDM6A. Plays an important role during early patterning and somitogenesis of the embryo. The polypeptide is Transcription elongation factor SPT6 (supt6h) (Danio rerio (Zebrafish)).